Consider the following 269-residue polypeptide: NAD kinase (269 aa).

Asp45 acts as the Proton acceptor in catalysis. NAD(+) contacts are provided by residues 45 to 46 (DG), 122 to 123 (NE), Arg149, Asp151, and Ala186.

Belongs to the NAD kinase family. Requires a divalent metal cation as cofactor.

The protein localises to the cytoplasm. The enzyme catalyses NAD(+) + ATP = ADP + NADP(+) + H(+). Functionally, involved in the regulation of the intracellular balance of NAD and NADP, and is a key enzyme in the biosynthesis of NADP. Catalyzes specifically the phosphorylation on 2'-hydroxyl of the adenosine moiety of NAD to yield NADP. This Staphylococcus haemolyticus (strain JCSC1435) protein is NAD kinase.